We begin with the raw amino-acid sequence, 323 residues long: Peroxidase 16 (323 aa).

Positions 1 to 23 (MKNQSSFSIVALLLIFFSSSVFA) are cleaved as a signal peptide. Cystine bridges form between Cys34–Cys113, Cys67–Cys72, Cys119–Cys319, and Cys198–Cys230. His65 serves as the catalytic Proton acceptor. Asp66, Val69, Gly71, Asp73, and Ser75 together coordinate Ca(2+). A substrate-binding site is contributed by Pro161. His191 is a heme b binding site. Residue Thr192 participates in Ca(2+) binding. Ca(2+) contacts are provided by Asp243, Ser246, and Asp251.

It belongs to the peroxidase family. Classical plant (class III) peroxidase subfamily. Heme b serves as cofactor. Ca(2+) is required as a cofactor. Expressed in the whole plant, but preferentially in roots and leaves.

It localises to the secreted. It carries out the reaction 2 a phenolic donor + H2O2 = 2 a phenolic radical donor + 2 H2O. In terms of biological role, removal of H(2)O(2), oxidation of toxic reductants, biosynthesis and degradation of lignin, suberization, auxin catabolism, response to environmental stresses such as wounding, pathogen attack and oxidative stress. These functions might be dependent on each isozyme/isoform in each plant tissue. The chain is Peroxidase 16 (PER16) from Arabidopsis thaliana (Mouse-ear cress).